The chain runs to 161 residues: Ubiquitin-conjugating enzyme 15 (161 aa).

One can recognise a UBC core domain in the interval 15 to 161 (IACNRLQKEL…TRWWFHDDKV (147 aa)). Catalysis depends on C99, which acts as the Glycyl thioester intermediate.

Belongs to the ubiquitin-conjugating enzyme family.

It carries out the reaction S-ubiquitinyl-[E1 ubiquitin-activating enzyme]-L-cysteine + [E2 ubiquitin-conjugating enzyme]-L-cysteine = [E1 ubiquitin-activating enzyme]-L-cysteine + S-ubiquitinyl-[E2 ubiquitin-conjugating enzyme]-L-cysteine.. Its pathway is protein modification; protein ubiquitination. Functionally, accepts the ubiquitin from the E1 complex and catalyzes its covalent attachment to other proteins. The polypeptide is Ubiquitin-conjugating enzyme 15 (UBC15) (Arabidopsis thaliana (Mouse-ear cress)).